The chain runs to 295 residues: Probable ketoamine kinase slr1563 (295 aa).

Residue 99–101 (EWL) coordinates ATP. Aspartate 201 functions as the Proton acceptor in the catalytic mechanism.

This sequence belongs to the fructosamine kinase family.

Functionally, ketoamine kinase that phosphorylates ketoamines on the third carbon of the sugar moiety to generate ketoamine 3-phosphate. In Synechocystis sp. (strain ATCC 27184 / PCC 6803 / Kazusa), this protein is Probable ketoamine kinase slr1563.